The primary structure comprises 181 residues: Crossover junction endodeoxyribonuclease RuvC (181 aa).

Catalysis depends on residues Asp-7, Glu-67, and Asp-139. Residues Asp-7, Glu-67, and Asp-139 each contribute to the Mg(2+) site.

This sequence belongs to the RuvC family. In terms of assembly, homodimer which binds Holliday junction (HJ) DNA. The HJ becomes 2-fold symmetrical on binding to RuvC with unstacked arms; it has a different conformation from HJ DNA in complex with RuvA. In the full resolvosome a probable DNA-RuvA(4)-RuvB(12)-RuvC(2) complex forms which resolves the HJ. It depends on Mg(2+) as a cofactor.

The protein localises to the cytoplasm. It carries out the reaction Endonucleolytic cleavage at a junction such as a reciprocal single-stranded crossover between two homologous DNA duplexes (Holliday junction).. Its function is as follows. The RuvA-RuvB-RuvC complex processes Holliday junction (HJ) DNA during genetic recombination and DNA repair. Endonuclease that resolves HJ intermediates. Cleaves cruciform DNA by making single-stranded nicks across the HJ at symmetrical positions within the homologous arms, yielding a 5'-phosphate and a 3'-hydroxyl group; requires a central core of homology in the junction. The consensus cleavage sequence is 5'-(A/T)TT(C/G)-3'. Cleavage occurs on the 3'-side of the TT dinucleotide at the point of strand exchange. HJ branch migration catalyzed by RuvA-RuvB allows RuvC to scan DNA until it finds its consensus sequence, where it cleaves and resolves the cruciform DNA. In Ralstonia nicotianae (strain ATCC BAA-1114 / GMI1000) (Ralstonia solanacearum), this protein is Crossover junction endodeoxyribonuclease RuvC.